Reading from the N-terminus, the 309-residue chain is 2-dehydropantoate 2-reductase (309 aa).

NADP(+) contacts are provided by residues 7 to 12 (GAGSIG), R31, and K74. CoA-binding positions include 8-10 (AGS), R31, K74, and C84. NADP(+)-binding residues include N100 and A124. The active-site Proton donor is K180. Residues K180, N184, N188, N198, and 247–250 (NYNS) contribute to the substrate site. CoA is bound at residue R257. E262 is an NADP(+) binding site.

Belongs to the ketopantoate reductase family. As to quaternary structure, homodimer.

It localises to the cytoplasm. The enzyme catalyses (R)-pantoate + NAD(+) = 2-dehydropantoate + NADH + H(+). The catalysed reaction is (R)-pantoate + NADP(+) = 2-dehydropantoate + NADPH + H(+). Its pathway is cofactor biosynthesis; coenzyme A biosynthesis. Regulated by feedback inhibition by coenzyme A (CoA). CoA acts by competing with NAD(P)H. A disulfide bond is formed between CoA and Cys-84, which indicates an irreversible inhibition upon binding of CoA. Catalyzes the NAD(P)H-dependent reduction of ketopantoate into pantoic acid. Prefers NADH rather than NADPH as the electron donor. This is 2-dehydropantoate 2-reductase from Thermococcus kodakarensis (strain ATCC BAA-918 / JCM 12380 / KOD1) (Pyrococcus kodakaraensis (strain KOD1)).